The chain runs to 248 residues: Large ribosomal subunit protein bL9m (248 aa).

The transit peptide at 1 to 25 (MLKNIYVTPLNLLKSATSLQQQVRT) directs the protein to the mitochondrion.

It belongs to the bacterial ribosomal protein bL9 family. Component of the mitochondrial ribosome large subunit (39S) which comprises a 16S rRNA and about 50 distinct proteins.

It is found in the mitochondrion. The protein is Large ribosomal subunit protein bL9m (mRpL9) of Drosophila melanogaster (Fruit fly).